Consider the following 419-residue polypeptide: Dimethylamine methyltransferase MtbB2 (419 aa).

A non-standard amino acid (pyrrolysine) is located at residue Pyl308.

It belongs to the dimethylamine methyltransferase family.

It carries out the reaction Co(I)-[dimethylamine-specific corrinoid protein] + dimethylamine + H(+) = methyl-Co(III)-[dimethylamine-specific corrinoid protein] + methylamine. It functions in the pathway one-carbon metabolism; methanogenesis from dimethylamine. Catalyzes the transfer of a methyl group from dimethylamine to the corrinoid cofactor of MtbC. No evidence for expression of this protein has been found after growth under presumably inducing conditions. This Methanosarcina barkeri protein is Dimethylamine methyltransferase MtbB2.